Here is an 839-residue protein sequence, read N- to C-terminus: Probable beta-glucosidase I (839 aa).

N-linked (GlcNAc...) asparagine glycosylation is present at asparagine 197. Residue aspartate 225 is part of the active site. A PA14 domain is found at 395-555 (DGKTGFSFKV…GQEELISNAV (161 aa)). Asparagine 620 carries N-linked (GlcNAc...) asparagine glycosylation.

Belongs to the glycosyl hydrolase 3 family.

The protein localises to the secreted. The enzyme catalyses Hydrolysis of terminal, non-reducing beta-D-glucosyl residues with release of beta-D-glucose.. Its pathway is glycan metabolism; cellulose degradation. Functionally, beta-glucosidases are one of a number of cellulolytic enzymes involved in the degradation of cellulosic biomass. Catalyzes the last step releasing glucose from the inhibitory cellobiose. The chain is Probable beta-glucosidase I (bglI) from Aspergillus oryzae (strain ATCC 42149 / RIB 40) (Yellow koji mold).